The primary structure comprises 196 residues: DnaA initiator-associating protein DiaA (196 aa).

One can recognise an SIS domain in the interval 34-196; it reads LVQSLLNGNK…DNTLFPHQDD (163 aa).

The protein belongs to the SIS family. DiaA subfamily. In terms of assembly, homotetramer; dimer of dimers.

In terms of biological role, required for the timely initiation of chromosomal replication via direct interactions with the DnaA initiator protein. The protein is DnaA initiator-associating protein DiaA of Cronobacter sakazakii (strain ATCC BAA-894) (Enterobacter sakazakii).